We begin with the raw amino-acid sequence, 563 residues long: Proton channel OTOP2 (563 aa).

The disordered stretch occupies residues 1–20; that stretch reads MSEELVPHPNESLPGPRASP. The next 12 membrane-spanning stretches (helical) occupy residues 30-50, 62-82, 100-120, 137-157, 173-193, 242-262, 290-310, 325-345, 373-393, 403-423, 496-516, and 528-548; these read LLSV…ISGG, VFAL…FYLL, PIWL…MDVF, ILHP…LWIS, LMFT…DESV, FYLY…LYVM, FFAG…VFIL, ALVI…LVSL, LMGA…AVVV, LNLS…VFII, DISL…AFGA, and FYGY…GIFY.

The protein belongs to the otopetrin family. Expressed at higher level in stomach, testis and olfactory bulb.

The protein resides in the cell membrane. The catalysed reaction is H(+)(in) = H(+)(out). Actives at neutral and alkaline extracellular pH, acid extracellular pH appears to inhibit the channel. Insensitive to activation by Zn(2+). Proton-selective ion channel open at neutral pH. Actives at neutral and alkaline extracellular pH, likely participates in some alkali-related physiological activities. The chain is Proton channel OTOP2 from Mus musculus (Mouse).